Here is a 573-residue protein sequence, read N- to C-terminus: Globulin-1 S allele (573 aa).

Residues 1-18 (MVSARIVVLLAVLLCAAA) constitute a signal peptide (or 21). A propeptide spanning residues 19-86 (AVASSWEDDN…DRSGEGSSED (68 aa)) is cleaved from the precursor. The tract at residues 65-102 (EKRQERSRHEADDRSGEGSSEDEREREQEKEEKQKDRR) is disordered. 2 Cupin type-1 domains span residues 104–262 (YVFD…DRLE) and 311–493 (YSLL…EEVD). The tract at residues 288 to 315 (RHASEGGHGPHWPLPPFGESRGPYSLLD) is disordered. N349 carries an N-linked (GlcNAc...) asparagine glycan. Disordered regions lie at residues 382–416 (PHRQ…EVGQ) and 498–573 (SRRE…TARM). Over residues 390-402 (ESERERGKGRRSE) the composition is skewed to basic and acidic residues. Over residues 403–413 (EEEESSEEQEE) the composition is skewed to acidic residues. Composition is skewed to basic and acidic residues over residues 525 to 542 (EERH…REER) and 549 to 561 (REGR…REEV).

The protein belongs to the 7S seed storage protein family. Three protein-processing steps occur in the formation of the mature protein from the primary translation product.

The protein is Globulin-1 S allele (GLB1) of Zea mays (Maize).